A 1516-amino-acid chain; its full sequence is Myosin-14 (1516 aa).

In terms of domain architecture, Myosin N-terminal SH3-like spans Asn7–Val56. The region spanning Ser61–Asn738 is the Myosin motor domain. ATP is bound by residues Gly155–Thr162 and Asn208–Lys216. Actin-binding regions lie at residues Leu494–Phe528, Asp530–Val553, Phe588–Leu612, and Leu612–Asn634. 6 consecutive IQ domains span residues Leu741–Asn770, Leu764–Val793, Arg789–Ser818, Leu812–Ala841, Gln837–Thr866, and Leu860–Glu889. A coiled-coil region spans residues Thr890 to Leu1056. Residues Gly1061–Gly1085 are disordered. Residues Lys1069–Asn1084 are compositionally biased toward polar residues. The region spanning Asp1158–Glu1463 is the Dilute domain.

This sequence belongs to the TRAFAC class myosin-kinesin ATPase superfamily. Myosin family. Plant myosin class XI subfamily. Homodimer.

Myosin heavy chain that is required for the cell cycle-regulated transport of various organelles and proteins for their segregation. Functions by binding with its tail domain to receptor proteins on organelles and exerting force with its N-terminal motor domain against actin filaments, thereby transporting its cargo along polarized actin cables. The sequence is that of Myosin-14 (XI-H) from Arabidopsis thaliana (Mouse-ear cress).